The chain runs to 364 residues: MAHRFPALTQEQKKELSEIAQSIVANGKGILAADESVGTMGNRLQRIKVENTEENRRQFREILFSVDSSINQSIGGVILFHETLYQKDSQGKLFRNILKEKGIVVGIKLDQGGAPLAGTNKETTIQGLDGLSERCAQYKKDGVDFGKWRAVLRIADQCPSSLAIQENANALARYASICQQNGLVPIVEPEVIPDGDHDLEHCQYVTEKVLAAAYKALNDHHVYLEGTLLKPNMVTAGHACTKKYTPEQVAMATVTALHRTVPAAVPGICFLSGGMSEEDATLNLNAINLCPLPKPWKLSFSYGRALQASALAAWGGKAANKEATQEAFMKRAVANHQAAKGQYVHTGSSGAASTQSLFTACYTY.

Ala-2 bears the N-acetylalanine mark. Lys-13 is modified (N6-succinyllysine). At Ser-36 the chain carries Phosphoserine. Position 39 is a phosphothreonine (Thr-39). Beta-D-fructose 1,6-bisphosphate is bound at residue Arg-43. Position 89 is a phosphoserine (Ser-89). The residue at position 119 (Thr-119) is a Phosphothreonine. Lys-121 carries the post-translational modification N6-succinyllysine. Ser-132 is subject to Phosphoserine. Glu-188 serves as the catalytic Proton acceptor. Lys-230 serves as the catalytic Schiff-base intermediate with dihydroxyacetone-P. A phosphoserine mark is found at Ser-272, Ser-276, Ser-299, and Ser-301. 272-274 (SGG) lines the beta-D-fructose 1,6-bisphosphate pocket. Arg-304 serves as a coordination point for beta-D-fructose 1,6-bisphosphate. Phosphoserine is present on Ser-309. N6-succinyllysine is present on Lys-317.

It belongs to the class I fructose-bisphosphate aldolase family. As to quaternary structure, homotetramer. Interacts with BBS1, BBS2, BBS4 and BBS7. Forms a ternary complex with G6PD and TP53; this interaction is direct.

The protein resides in the cytoplasm. It is found in the cytosol. The protein localises to the cytoskeleton. Its subcellular location is the microtubule organizing center. It localises to the centrosome. The protein resides in the centriolar satellite. It catalyses the reaction beta-D-fructose 1,6-bisphosphate = D-glyceraldehyde 3-phosphate + dihydroxyacetone phosphate. It carries out the reaction beta-D-fructose 1-phosphate = D-glyceraldehyde + dihydroxyacetone phosphate. The protein operates within carbohydrate degradation; glycolysis; D-glyceraldehyde 3-phosphate and glycerone phosphate from D-glucose: step 4/4. Its pathway is carbohydrate biosynthesis; gluconeogenesis. It participates in carbohydrate metabolism; fructose metabolism. Catalyzes the aldol cleavage of fructose 1,6-biphosphate to form two triosephosphates dihydroxyacetone phosphate and D-glyceraldehyde 3-phosphate in glycolysis as well as the reverse stereospecific aldol addition reaction in gluconeogenesis. In fructolysis, metabolizes fructose 1-phosphate derived from the phosphorylation of dietary fructose by fructokinase into dihydroxyacetone phosphate and D-glyceraldehyde. Acts as an adapter independently of its enzymatic activity, exerts a tumor suppressor role by stabilizing the ternary complex with G6PD and TP53 to inhibit G6PD activity and keep oxidative pentose phosphate metabolism in check. The chain is Fructose-bisphosphate aldolase B (ALDOB) from Pongo abelii (Sumatran orangutan).